The following is a 680-amino-acid chain: DNA ligase (680 aa).

Residues 35 to 39 (DADFD), 86 to 87 (SL), and Glu111 contribute to the NAD(+) site. Lys113 acts as the N6-AMP-lysine intermediate in catalysis. NAD(+) is bound by residues Arg134, Glu174, Lys290, and Lys314. Positions 408, 411, 427, and 433 each coordinate Zn(2+). Residues 597–680 (VAEQTLEGLT…RLLNTGSADE (84 aa)) form the BRCT domain.

This sequence belongs to the NAD-dependent DNA ligase family. LigA subfamily. Requires Mg(2+) as cofactor. Mn(2+) is required as a cofactor.

It carries out the reaction NAD(+) + (deoxyribonucleotide)n-3'-hydroxyl + 5'-phospho-(deoxyribonucleotide)m = (deoxyribonucleotide)n+m + AMP + beta-nicotinamide D-nucleotide.. In terms of biological role, DNA ligase that catalyzes the formation of phosphodiester linkages between 5'-phosphoryl and 3'-hydroxyl groups in double-stranded DNA using NAD as a coenzyme and as the energy source for the reaction. It is essential for DNA replication and repair of damaged DNA. The chain is DNA ligase from Corynebacterium glutamicum (strain ATCC 13032 / DSM 20300 / JCM 1318 / BCRC 11384 / CCUG 27702 / LMG 3730 / NBRC 12168 / NCIMB 10025 / NRRL B-2784 / 534).